We begin with the raw amino-acid sequence, 243 residues long: Ribonuclease 3 (243 aa).

An RNase III domain is found at 10 to 146; the sequence is VNRFRKRFDT…FIGALYLDQG (137 aa). Glu59 is a Mg(2+) binding site. Asp63 is a catalytic residue. Mg(2+) is bound by residues Asp132 and Glu135. The active site involves Glu135. One can recognise a DRBM domain in the interval 172–241; sequence DFKTQFQEYV…AESAYKQLKQ (70 aa). The segment covering 219–231 has biased composition (basic and acidic residues); that stretch reads GKGKTKKESEQRA. The interval 219–243 is disordered; the sequence is GKGKTKKESEQRAAESAYKQLKQIK.

The protein belongs to the ribonuclease III family. Homodimer. Mg(2+) serves as cofactor.

The protein localises to the cytoplasm. It carries out the reaction Endonucleolytic cleavage to 5'-phosphomonoester.. Digests double-stranded RNA. Involved in the processing of primary rRNA transcript to yield the immediate precursors to the large and small rRNAs (23S and 16S). Processes some mRNAs, and tRNAs when they are encoded in the rRNA operon. Processes pre-crRNA and tracrRNA of type II CRISPR loci if present in the organism. This Staphylococcus aureus (strain USA300) protein is Ribonuclease 3.